Here is a 1298-residue protein sequence, read N- to C-terminus: DNA repair protein rad-50 (1298 aa).

The ATP site is built by arginine 13, asparagine 38, glycine 39, glycine 41, lysine 42, threonine 43, threonine 44, isoleucine 66, and glutamine 158. Position 43 (threonine 43) interacts with Mg(2+). Mg(2+) is bound at residue glutamine 158. 3 coiled-coil regions span residues 222–291 (ARQN…IRVE), 317–598 (EERA…QYRK), and 622–660 (AEEV…IEES). One can recognise a Zinc-hook domain in the interval 622–719 (AEEVSEKLEN…EEIIIVKAEG (98 aa)). Residues cysteine 666 and cysteine 669 each contribute to the Zn(2+) site. 2 coiled-coil regions span residues 691–719 (LSFP…KAEG) and 754–1092 (KNEK…KESI).

The protein belongs to the SMC family. RAD50 subfamily. Component of the MRN complex composed of two heterodimers rad-50 and mre-11 associated with a single nbs-1. Requires Zn(2+) as cofactor.

The protein resides in the nucleus. It localises to the chromosome. The catalysed reaction is ATP + H2O = ADP + phosphate + H(+). In terms of biological role, component of the MRN complex, which plays a central role in double-strand break (DSB) repair, DNA recombination, maintenance of telomere integrity and meiosis. The MRN complex is involved in the repair of DNA double-strand breaks (DSBs) via homologous recombination (HR), an error-free mechanism which primarily occurs during S and G2 phases. The complex (1) mediates the end resection of damaged DNA, which generates proper single-stranded DNA, a key initial steps in HR, and is (2) required for the recruitment of other repair factors and efficient activation of ATM and ATR upon DNA damage. The MRN complex possesses single-strand endonuclease activity and double-strand-specific 3'-5' exonuclease activity, which are provided by mre-11, to initiate end resection, which is required for single-strand invasion and recombination. Within the complex, rad-50 is both required to bind DNA ends and hold them in close proximity and regulate the activity of mre-11. Rad-50 provides an ATP-dependent control of mre-11 by positioning DNA ends into the mre-11 active site: ATP-binding induces a large structural change from an open form with accessible mre-11 nuclease sites into a closed form. This Caenorhabditis elegans protein is DNA repair protein rad-50 (rad-50).